Reading from the N-terminus, the 273-residue chain is Ribosomal RNA small subunit methyltransferase A (273 aa).

Residues asparagine 18, leucine 20, glycine 45, glutamate 66, aspartate 91, and asparagine 113 each coordinate S-adenosyl-L-methionine.

This sequence belongs to the class I-like SAM-binding methyltransferase superfamily. rRNA adenine N(6)-methyltransferase family. RsmA subfamily.

The protein localises to the cytoplasm. It catalyses the reaction adenosine(1518)/adenosine(1519) in 16S rRNA + 4 S-adenosyl-L-methionine = N(6)-dimethyladenosine(1518)/N(6)-dimethyladenosine(1519) in 16S rRNA + 4 S-adenosyl-L-homocysteine + 4 H(+). Functionally, specifically dimethylates two adjacent adenosines (A1518 and A1519) in the loop of a conserved hairpin near the 3'-end of 16S rRNA in the 30S particle. May play a critical role in biogenesis of 30S subunits. The sequence is that of Ribosomal RNA small subunit methyltransferase A from Escherichia fergusonii (strain ATCC 35469 / DSM 13698 / CCUG 18766 / IAM 14443 / JCM 21226 / LMG 7866 / NBRC 102419 / NCTC 12128 / CDC 0568-73).